A 155-amino-acid chain; its full sequence is 6,7-dimethyl-8-ribityllumazine synthase (155 aa).

5-amino-6-(D-ribitylamino)uracil-binding positions include phenylalanine 22, 57–59 (AYE), and 81–83 (SVI). 86–87 (GT) lines the (2S)-2-hydroxy-3-oxobutyl phosphate pocket. The Proton donor role is filled by histidine 88. Phenylalanine 113 is a binding site for 5-amino-6-(D-ribitylamino)uracil. Arginine 127 contributes to the (2S)-2-hydroxy-3-oxobutyl phosphate binding site.

Belongs to the DMRL synthase family. Forms an icosahedral capsid composed of 60 subunits, arranged as a dodecamer of pentamers.

It catalyses the reaction (2S)-2-hydroxy-3-oxobutyl phosphate + 5-amino-6-(D-ribitylamino)uracil = 6,7-dimethyl-8-(1-D-ribityl)lumazine + phosphate + 2 H2O + H(+). Its pathway is cofactor biosynthesis; riboflavin biosynthesis; riboflavin from 2-hydroxy-3-oxobutyl phosphate and 5-amino-6-(D-ribitylamino)uracil: step 1/2. In terms of biological role, catalyzes the formation of 6,7-dimethyl-8-ribityllumazine by condensation of 5-amino-6-(D-ribitylamino)uracil with 3,4-dihydroxy-2-butanone 4-phosphate. This is the penultimate step in the biosynthesis of riboflavin. The polypeptide is 6,7-dimethyl-8-ribityllumazine synthase (Photobacterium phosphoreum).